The primary structure comprises 177 residues: B9 domain-containing protein 2 (177 aa).

One can recognise a C2 B9-type domain in the interval 2–118; the sequence is AEVHIIGQIL…EIGTWKVAPN (117 aa).

The protein belongs to the B9D family. Probable component of the tectonic-like complex (also named MKS complex), composed of B9d1, B9d2, Cc2d2a, Mks1 and tctn. In terms of tissue distribution, expressed in chordotonal neurons in the antennae (at protein level). Expressed in spermatids (at protein level).

It localises to the cytoplasm. Its subcellular location is the cytoskeleton. The protein resides in the cilium basal body. In terms of biological role, probable component of the tectonic-like complex (also named MKS complex), a complex localized at the transition zone of primary cilia. Has a role in ciliary structure and function. This Drosophila melanogaster (Fruit fly) protein is B9 domain-containing protein 2.